A 777-amino-acid polypeptide reads, in one-letter code: Lon protease (777 aa).

Positions Ile11–Ile204 constitute a Lon N-terminal domain. Gly356–Thr363 contributes to the ATP binding site. In terms of domain architecture, Lon proteolytic spans Thr592 to Lys773. Catalysis depends on residues Ser679 and Lys722.

This sequence belongs to the peptidase S16 family. Homohexamer. Organized in a ring with a central cavity.

Its subcellular location is the cytoplasm. It carries out the reaction Hydrolysis of proteins in presence of ATP.. Functionally, ATP-dependent serine protease that mediates the selective degradation of mutant and abnormal proteins as well as certain short-lived regulatory proteins. Required for cellular homeostasis and for survival from DNA damage and developmental changes induced by stress. Degrades polypeptides processively to yield small peptide fragments that are 5 to 10 amino acids long. Binds to DNA in a double-stranded, site-specific manner. This is Lon protease from Buchnera aphidicola subsp. Acyrthosiphon pisum (strain APS) (Acyrthosiphon pisum symbiotic bacterium).